Reading from the N-terminus, the 456-residue chain is Serine--tRNA ligase (456 aa).

2 disordered regions span residues 107-130 (PHSS…GTPP) and 229-253 (FLEN…QDDD). A compositionally biased stretch (basic and acidic residues) spans 114–125 (GRSESDNREVRR). Residues 239–248 (LPSNSNSPQG) show a composition bias toward polar residues. Residue 260 to 262 (TSE) coordinates L-serine. ATP is bound at residue 291-293 (RSE). Glu-314 contributes to the L-serine binding site. Position 378–381 (378–381 (EISS)) interacts with ATP. Residue Ser-413 coordinates L-serine.

The protein belongs to the class-II aminoacyl-tRNA synthetase family. Type-1 seryl-tRNA synthetase subfamily. In terms of assembly, homodimer. The tRNA molecule binds across the dimer.

It localises to the cytoplasm. The enzyme catalyses tRNA(Ser) + L-serine + ATP = L-seryl-tRNA(Ser) + AMP + diphosphate + H(+). It catalyses the reaction tRNA(Sec) + L-serine + ATP = L-seryl-tRNA(Sec) + AMP + diphosphate + H(+). Its pathway is aminoacyl-tRNA biosynthesis; selenocysteinyl-tRNA(Sec) biosynthesis; L-seryl-tRNA(Sec) from L-serine and tRNA(Sec): step 1/1. Functionally, catalyzes the attachment of serine to tRNA(Ser). Is also able to aminoacylate tRNA(Sec) with serine, to form the misacylated tRNA L-seryl-tRNA(Sec), which will be further converted into selenocysteinyl-tRNA(Sec). In Nitrosospira multiformis (strain ATCC 25196 / NCIMB 11849 / C 71), this protein is Serine--tRNA ligase.